Reading from the N-terminus, the 405-residue chain is MSLPKPNSFRAGPDERGHFGTFGGRFVAETLMPLILDLEKAYAAAKADPSFQKEMNGYLKDYVGRPSPLYFAERLTEHLGGAKIYLKREELNHTGSHKVNNVLGQIMVARRMGKKRIIAETGAGQHGVATATLCARFGLECIVYMGAVDVARQEPNVIRMEMLGAKVVPVQSGTRTLKDAMNDALRDWVTNVATTFYCIGTVAGPHPYPAMVRDFQSVIGHETREQMMAAEGRLPDSLVACIGGGSNAMGLFHPFLDEPAVEIFGVEAAGHGLTNLHAASLAGGRPGVLHGNRTYLLMNEDGQIQDAHSISAGLDYPGIGPEHAWLHETGRVTYLSATDEEALAAFQLLSRLEGIIPALESAHAIAKLSQLAPKRPRDHLMVVNLSGRGDKDVPQVGDILRGRKS.

Lys-98 bears the N6-(pyridoxal phosphate)lysine mark.

Belongs to the TrpB family. As to quaternary structure, tetramer of two alpha and two beta chains. The cofactor is pyridoxal 5'-phosphate.

It catalyses the reaction (1S,2R)-1-C-(indol-3-yl)glycerol 3-phosphate + L-serine = D-glyceraldehyde 3-phosphate + L-tryptophan + H2O. Its pathway is amino-acid biosynthesis; L-tryptophan biosynthesis; L-tryptophan from chorismate: step 5/5. Its function is as follows. The beta subunit is responsible for the synthesis of L-tryptophan from indole and L-serine. This chain is Tryptophan synthase beta chain, found in Afipia carboxidovorans (strain ATCC 49405 / DSM 1227 / KCTC 32145 / OM5) (Oligotropha carboxidovorans).